The chain runs to 415 residues: Serine hydroxymethyltransferase (415 aa).

Residues leucine 117 and 121–123 (GHL) contribute to the (6S)-5,6,7,8-tetrahydrofolate site. Lysine 226 bears the N6-(pyridoxal phosphate)lysine mark. (6S)-5,6,7,8-tetrahydrofolate-binding positions include glutamate 241 and 349–351 (SPF).

This sequence belongs to the SHMT family. As to quaternary structure, homodimer. The cofactor is pyridoxal 5'-phosphate.

Its subcellular location is the cytoplasm. The enzyme catalyses (6R)-5,10-methylene-5,6,7,8-tetrahydrofolate + glycine + H2O = (6S)-5,6,7,8-tetrahydrofolate + L-serine. It participates in one-carbon metabolism; tetrahydrofolate interconversion. The protein operates within amino-acid biosynthesis; glycine biosynthesis; glycine from L-serine: step 1/1. Functionally, catalyzes the reversible interconversion of serine and glycine with tetrahydrofolate (THF) serving as the one-carbon carrier. This reaction serves as the major source of one-carbon groups required for the biosynthesis of purines, thymidylate, methionine, and other important biomolecules. Also exhibits THF-independent aldolase activity toward beta-hydroxyamino acids, producing glycine and aldehydes, via a retro-aldol mechanism. This Trichlorobacter lovleyi (strain ATCC BAA-1151 / DSM 17278 / SZ) (Geobacter lovleyi) protein is Serine hydroxymethyltransferase.